A 197-amino-acid polypeptide reads, in one-letter code: MAKKEVVKIAKLQFIAGQAKPGPSLAGVGINMPEFTRQFNEQTRDRGNEPVPVEITAYKDKSFDFRLFTAPASFKILQAIKAKSGSANSKTNIIGTLTLAQLEEIAKYKLPDLNTDDYKVAMHTIAGTAKNMGVLVEGWDDVKKAKEEAKAAKLAQLKAEAKEAALKEAEKELVDSKGKEVEVKLVGEEEQSESENN.

The protein belongs to the universal ribosomal protein uL11 family. In terms of assembly, part of the ribosomal stalk of the 50S ribosomal subunit. Interacts with L10 and the large rRNA to form the base of the stalk. L10 forms an elongated spine to which L12 dimers bind in a sequential fashion forming a multimeric L10(L12)X complex. One or more lysine residues are methylated.

Its function is as follows. Forms part of the ribosomal stalk which helps the ribosome interact with GTP-bound translation factors. This chain is Large ribosomal subunit protein uL11, found in Mycoplasmopsis pulmonis (strain UAB CTIP) (Mycoplasma pulmonis).